The chain runs to 157 residues: Large ribosomal subunit protein bL20 (157 aa).

The tract at residues 121 to 157 is disordered; sequence TSAPAVSAEAAPKAKAAKKPAAKKAAAKKPVAEEAAK. Over residues 122 to 134 the composition is skewed to low complexity; sequence SAPAVSAEAAPKA. Basic residues predominate over residues 135 to 147; the sequence is KAAKKPAAKKAAA.

This sequence belongs to the bacterial ribosomal protein bL20 family.

Functionally, binds directly to 23S ribosomal RNA and is necessary for the in vitro assembly process of the 50S ribosomal subunit. It is not involved in the protein synthesizing functions of that subunit. The chain is Large ribosomal subunit protein bL20 (rplT) from Arthrobacter sp. (strain FB24).